A 460-amino-acid chain; its full sequence is MLKVLIPTIMLFPTIWLTSPKWLWTTTTAHSLLIASISLMWFKWTSETGWTSSNTYLATDPLSTPLLVLTCWLLPLMILASQNHINPEPISRQRLYITLLASLQTFLIMAFGATEIIMFYIMFEATLIPTLIIITRWGNQTERLNAGTYFLFYTLAGSLPLLVALLLLQQSTGTLSMLVLQYSQPLQLNSWGHMIWWAACLIAFLVKMPLYGVHLWLPKAHVEAPVAGSMVLAAVLLKLGGYGMMRMMVMLDPLSKELAYPFIILALWGIIMTGSICLRQTDLKSLIAYSSVSHMGLVAGGILIQTPWGFSGAIILMIAHGLVSSALFCLANTAYERTHSRTMILARGLQIIFPLTAVWWFIANLANLALPPLPNLMGELMIITTLFNWSPWTILLTGLGTLITAGYSLYMFLMSQRGPTPNHITGLQPFHTREHLLMTLHLIPVILLVTKPELMWGWCY.

Helical transmembrane passes span 20–42 (PKWLWTTTTAHSLLIASISLMWF), 61–81 (PLSTPLLVLTCWLLPLMILAS), 93–113 (QRLYITLLASLQTFLIMAFGA), 114–134 (TEIIMFYIMFEATLIPTLIII), 148–168 (TYFLFYTLAGSLPLLVALLLL), 195–215 (IWWAACLIAFLVKMPLYGVHL), 225–245 (PVAGSMVLAAVLLKLGGYGMM), 258–278 (LAYPFIILALWGIIMTGSICL), 285–304 (SLIAYSSVSHMGLVAGGILI), 308–330 (WGFSGAIILMIAHGLVSSALFCL), 351–371 (IIFPLTAVWWFIANLANLALP), and 394–414 (ILLTGLGTLITAGYSLYMFLM).

It belongs to the complex I subunit 4 family.

The protein localises to the mitochondrion membrane. The enzyme catalyses a ubiquinone + NADH + 5 H(+)(in) = a ubiquinol + NAD(+) + 4 H(+)(out). Its function is as follows. Core subunit of the mitochondrial membrane respiratory chain NADH dehydrogenase (Complex I) that is believed to belong to the minimal assembly required for catalysis. Complex I functions in the transfer of electrons from NADH to the respiratory chain. The immediate electron acceptor for the enzyme is believed to be ubiquinone. The chain is NADH-ubiquinone oxidoreductase chain 4 (MT-ND4) from Carassius auratus (Goldfish).